A 474-amino-acid polypeptide reads, in one-letter code: MSATRKSRAGDEPLPRPPRGAPHTSDQVLGPGVTYVVKYLGCIEVLRSMRSLDFSTRTQVTREAISRVCEAVPGAKGALKKRKPPSKMLSSILGKSNLQFAGMSISLTISTASLNLRTPDSKQIIANHHMRSISFASGGDPDTTDYVAYVAKDPVNRRACHILECCDGLAQDVIGSIGQAFELRFKQYLQCPSKVPALQDRMQSLDEPWTEEEGDGPDHPYYNSVPTKMPPPGGFLDARLKGRPHAPEAAQFAGKEQTYYQGRHLGDTFGEDWQRAPTRQGSLDIYSTAEGKTHMVPVGETPTYVNTQPVPPQVWPAATSSTESSPRKDLFDMKPFEDALRNQPLGPMLSKAASVECISPVTPRAPDARMLEELNAEPWYQGEMSRKEAEALLREDGDFLVRKSTTNPGSFVLTGMHNGQAKHLLLVDPEGTIRTKDRVFDSISHLINYHLESSLPIVSAGSELCLQQPVERKP.

The segment at 1-27 is disordered; the sequence is MSATRKSRAGDEPLPRPPRGAPHTSDQ. The region spanning 29–214 is the PID domain; that stretch reads LGPGVTYVVK…LDEPWTEEEG (186 aa). Positions 215 to 378 are CH1; it reads DGPDHPYYNS…RMLEELNAEP (164 aa). The residue at position 282 (S282) is a Phosphoserine. The disordered stretch occupies residues 308–328; the sequence is QPVPPQVWPAATSSTESSPRK. Residues 379–470 form the SH2 domain; that stretch reads WYQGEMSRKE…GSELCLQQPV (92 aa).

As to quaternary structure, interacts with the Trk receptors in a phosphotyrosine-dependent manner. Once activated, binds to GRB2. Interacts with activated EGF receptors. Tyrosine phosphorylated. In terms of tissue distribution, predominantly expressed in the adult brain.

Functionally, signaling adapter that couples activated growth factor receptors to signaling pathway in neurons. Involved in the signal transduction pathways of neurotrophin-activated Trk receptors in cortical neurons. The polypeptide is SHC-transforming protein 3 (Shc3) (Mus musculus (Mouse)).